Consider the following 262-residue polypeptide: MQVDLLSSAQSAHALHLFHQHSPLVHCMTNDVVQTFTANTLLALGASPAMVIETEEASQFAAIASALLINVGTLTQPRAQAMRAAVEQAKSSQTRWTLDPVAVGALDYRRHFCHELLSFKPAAIRGNASEIMALAGIANGGRGVDTTDAAANAIPAAQTLARETGAIVVVTGEVDYVTDGHRIIGIHGGDPLMTKVVGTGCALSAVVAACCALPGDTLENVASACHWMKQAGERAVARSEGPGSFVPHFLDALWQLTQEVQA.

Met-50 contacts substrate. ATP is bound by residues Arg-125 and Thr-171. Gly-198 is a substrate binding site.

The protein belongs to the Thz kinase family. It depends on Mg(2+) as a cofactor.

It carries out the reaction 5-(2-hydroxyethyl)-4-methylthiazole + ATP = 4-methyl-5-(2-phosphooxyethyl)-thiazole + ADP + H(+). Its pathway is cofactor biosynthesis; thiamine diphosphate biosynthesis; 4-methyl-5-(2-phosphoethyl)-thiazole from 5-(2-hydroxyethyl)-4-methylthiazole: step 1/1. Its function is as follows. Catalyzes the phosphorylation of the hydroxyl group of 4-methyl-5-beta-hydroxyethylthiazole (THZ). In Shigella flexneri serotype 5b (strain 8401), this protein is Hydroxyethylthiazole kinase.